A 148-amino-acid chain; its full sequence is Helix-loop-helix protein 14 (148 aa).

Disordered regions lie at residues 1–21 (MAKK…HQVN), 63–83 (DPQQ…NSNN), and 112–132 (GDVS…SYSP). Positions 4 to 17 (KNQVARNERERKRV) are basic motif. One can recognise a bHLH domain in the interval 4–56 (KNQVARNERERKRVHQVNHGFDVLRNRLQPKNHTKKWSKADTLREAVKYIQQL). The segment at 18 to 56 (HQVNHGFDVLRNRLQPKNHTKKWSKADTLREAVKYIQQL) is helix-loop-helix motif. Polar residues predominate over residues 63–78 (DPQQPSVSSSTPDYTM). Positions 120 to 132 (SPTSSVSSSSYSP) are enriched in low complexity.

The protein localises to the nucleus. In terms of biological role, probable transcription factor, involved in determining neuroblast cell fate, morphogenesis and aspects of terminal differentiation in both left/right symmetric and asymmetric neuronal lineages. The chain is Helix-loop-helix protein 14 from Caenorhabditis elegans.